The chain runs to 424 residues: Tyrosine--tRNA ligase (424 aa).

Residue Tyr-37 participates in L-tyrosine binding. A 'HIGH' region motif is present at residues 42–51; it reads PTADSLHLGH. Tyr-175 and Gln-179 together coordinate L-tyrosine. The 'KMSKS' region signature appears at 235–239; sequence KFGKT. Residue Lys-238 participates in ATP binding. The 58-residue stretch at 357–414 folds into the S4 RNA-binding domain; sequence AELQKALVSAQLAPSRSQARTLIQSSSISVNGKKQLKPEYIFTSEDRLLDRYTLLRRG.

This sequence belongs to the class-I aminoacyl-tRNA synthetase family. TyrS type 1 subfamily. In terms of assembly, homodimer.

The protein resides in the cytoplasm. The enzyme catalyses tRNA(Tyr) + L-tyrosine + ATP = L-tyrosyl-tRNA(Tyr) + AMP + diphosphate + H(+). Functionally, catalyzes the attachment of tyrosine to tRNA(Tyr) in a two-step reaction: tyrosine is first activated by ATP to form Tyr-AMP and then transferred to the acceptor end of tRNA(Tyr). In Hamiltonella defensa subsp. Acyrthosiphon pisum (strain 5AT), this protein is Tyrosine--tRNA ligase.